The following is a 1318-amino-acid chain: Major tegument protein (1318 aa).

The protein belongs to the herpesviridae MTP family. In terms of assembly, interacts with host DAXX; this interaction disrupts the chromatin remodeling complex ATRX:DAXX and thus allows viral transcription. Interacts with host SMC6; this interaction targets SMC5-SMC6 complex for proteasomal degradation.

It localises to the virion tegument. The protein localises to the host nucleus. Functionally, tegument protein that plays a role in the inhibition of host intrinsic defenses to promote viral early gene activation. Interacts with host DAXX and thereby disrupts the complex between DAXX and ATRX. Suppresses the DAXX-ATRX dependent deposition of histone H3.3 on viral chromatin allowing viral transcription. Targets also host SMC5/6 for proteasomal degradation in a CUL7 and calpain-dependent manner to support nuclear membrane-less replication compartment formation and lytic virus replication. The protein is Major tegument protein of Epstein-Barr virus (strain GD1) (HHV-4).